The sequence spans 39 residues: Photosystem II reaction center protein X (39 aa).

Residues 10–30 (WSLLWGTAIVVIPVTVGLIFI) form a helical membrane-spanning segment.

The protein belongs to the PsbX family. Type 1 subfamily. As to quaternary structure, PSII is composed of 1 copy each of membrane proteins PsbA, PsbB, PsbC, PsbD, PsbE, PsbF, PsbH, PsbI, PsbJ, PsbK, PsbL, PsbM, PsbT, PsbX, PsbY, PsbZ, Psb30/Ycf12, peripheral proteins PsbO, CyanoQ (PsbQ), PsbU, PsbV and a large number of cofactors. It forms dimeric complexes.

The protein resides in the cellular thylakoid membrane. Functionally, involved in the binding and/or turnover of quinones at the Q(B) site of photosystem II (PSII). PSII is a light-driven water plastoquinone oxidoreductase, using light energy to abstract electrons from H(2)O, generating a proton gradient subsequently used for ATP formation. The protein is Photosystem II reaction center protein X of Nostoc punctiforme (strain ATCC 29133 / PCC 73102).